We begin with the raw amino-acid sequence, 444 residues long: MASSAGRDKLRSRGQRVFAFGSSTPRDLSHMSKVPQNLRNYDAKSVDKSPSDAPSLHDYIVKARSLSREACDSRNQFVFGSSTPRTLAHLDKIPHKQRVYDAKIPKKNTTHSDFKAAPIRFNAPPVPITKPAKKEENRHVITSKDDDIASEPDIVQDREEFMNEMKKHKIELEKKKSLGKNDSKTTIEIPTPKAAETQQEHVKFAHAPEIAGNSQKAVRIQSETQEEAPVAVKNLSANKMNDQIEVSQLMNEITPESVPAVESLDNQKNANVVGDLLAKVQKVADDTIDKSKTTVAADVAKMSGALQKAEEEVVQTIDQTVKNIKSNVNEVKKDVEKNIAEKVDDITKELEKSAKSLEETTDKIGSKIDNTSQAIKSNLEEASLKTEKSVNDAVKSGEKLIGDLASEAKKTFDSAEQKLDAKFSKIGSTADSTLEDVKNGLRHF.

Over residues 1-11 the composition is skewed to basic and acidic residues; that stretch reads MASSAGRDKLR. The interval 1–35 is disordered; it reads MASSAGRDKLRSRGQRVFAFGSSTPRDLSHMSKVP.

This is an uncharacterized protein from Caenorhabditis elegans.